Here is a 319-residue protein sequence, read N- to C-terminus: Ribonuclease Z (319 aa).

The Zn(2+) site is built by His-62, His-64, Asp-66, His-67, His-139, Asp-209, and His-268. Catalysis depends on Asp-66, which acts as the Proton acceptor.

It belongs to the RNase Z family. In terms of assembly, homodimer. Zn(2+) serves as cofactor.

The enzyme catalyses Endonucleolytic cleavage of RNA, removing extra 3' nucleotides from tRNA precursor, generating 3' termini of tRNAs. A 3'-hydroxy group is left at the tRNA terminus and a 5'-phosphoryl group is left at the trailer molecule.. Functionally, zinc phosphodiesterase, which displays some tRNA 3'-processing endonuclease activity. Probably involved in tRNA maturation, by removing a 3'-trailer from precursor tRNA. The polypeptide is Ribonuclease Z (Pseudomonas putida (strain ATCC 700007 / DSM 6899 / JCM 31910 / BCRC 17059 / LMG 24140 / F1)).